The primary structure comprises 35 residues: Putative neurotoxin (35 aa).

The region spanning 1 to 35 (KEGYPKNSEGCKITCLFNDPYCKGLCINLSTQADY) is the LCN-type CS-alpha/beta domain.

As to expression, expressed by the venom gland.

The protein localises to the secreted. In terms of biological role, causes paralysis and death in insects (A.domestica). In Rhopalurus junceus (Caribbean blue scorpion), this protein is Putative neurotoxin.